A 217-amino-acid chain; its full sequence is Protein GrpE (217 aa).

Belongs to the GrpE family. In terms of assembly, homodimer.

The protein localises to the cytoplasm. Its function is as follows. Participates actively in the response to hyperosmotic and heat shock by preventing the aggregation of stress-denatured proteins, in association with DnaK and GrpE. It is the nucleotide exchange factor for DnaK and may function as a thermosensor. Unfolded proteins bind initially to DnaJ; upon interaction with the DnaJ-bound protein, DnaK hydrolyzes its bound ATP, resulting in the formation of a stable complex. GrpE releases ADP from DnaK; ATP binding to DnaK triggers the release of the substrate protein, thus completing the reaction cycle. Several rounds of ATP-dependent interactions between DnaJ, DnaK and GrpE are required for fully efficient folding. In Mycoplasma genitalium (strain ATCC 33530 / DSM 19775 / NCTC 10195 / G37) (Mycoplasmoides genitalium), this protein is Protein GrpE.